We begin with the raw amino-acid sequence, 340 residues long: Dihydroorotase (340 aa).

Zn(2+)-binding residues include H14 and H16. Residues 16–18 (HLR) and N42 contribute to the substrate site. The Zn(2+) site is built by K100, H137, and H175. K100 bears the N6-carboxylysine mark. H137 contributes to the substrate binding site. L220 serves as a coordination point for substrate. D248 contacts Zn(2+). The active site involves D248. Substrate contacts are provided by H252 and A264.

This sequence belongs to the metallo-dependent hydrolases superfamily. DHOase family. Class II DHOase subfamily. In terms of assembly, homodimer. Zn(2+) is required as a cofactor.

It carries out the reaction (S)-dihydroorotate + H2O = N-carbamoyl-L-aspartate + H(+). It participates in pyrimidine metabolism; UMP biosynthesis via de novo pathway; (S)-dihydroorotate from bicarbonate: step 3/3. Its function is as follows. Catalyzes the reversible cyclization of carbamoyl aspartate to dihydroorotate. This chain is Dihydroorotase, found in Sphingopyxis alaskensis (strain DSM 13593 / LMG 18877 / RB2256) (Sphingomonas alaskensis).